The sequence spans 105 residues: Vacuolar ATPase assembly integral membrane protein VMA21 homolog (105 aa).

Residues 1 to 26 form a disordered region; that stretch reads MSTKNKKAAGGNGGAPKQTRQQSHDS. Topologically, residues 1–36 are cytoplasmic; sequence MSTKNKKAAGGNGGAPKQTRQQSHDSQDYSSFKTVL. A helical membrane pass occupies residues 37–57; it reads FYCMLIVFLPVLTFFVLKGFV. Topologically, residues 58–68 are lumenal; that stretch reads LDQFLDISEVK. Residues 69 to 89 traverse the membrane as a helical segment; the sequence is VNIASAVGAVVALHIALGLYI. Residues 90-105 are Cytoplasmic-facing; the sequence is YRAYFGAPGSKGSKTD.

It belongs to the VMA21 family.

It is found in the endoplasmic reticulum membrane. The protein localises to the endoplasmic reticulum-Golgi intermediate compartment membrane. Its subcellular location is the cytoplasmic vesicle. It localises to the COPII-coated vesicle membrane. In terms of biological role, required for the assembly of the V0 complex of the vacuolar ATPase (V-ATPase) in the endoplasmic reticulum. This Drosophila simulans (Fruit fly) protein is Vacuolar ATPase assembly integral membrane protein VMA21 homolog.